The chain runs to 281 residues: Large ribosomal subunit protein uL2 (281 aa).

A disordered region spans residues 223 to 281 (VRGSVMNPVDHPHGGGEGKQPVGRKSPLTPWGKIALGVKTRKTKKSSNKLILRRRKDAK). Residues 261–281 (KTRKTKKSSNKLILRRRKDAK) are compositionally biased toward basic residues.

The protein belongs to the universal ribosomal protein uL2 family. As to quaternary structure, part of the 50S ribosomal subunit. Forms a bridge to the 30S subunit in the 70S ribosome.

One of the primary rRNA binding proteins. Required for association of the 30S and 50S subunits to form the 70S ribosome, for tRNA binding and peptide bond formation. It has been suggested to have peptidyltransferase activity; this is somewhat controversial. Makes several contacts with the 16S rRNA in the 70S ribosome. The polypeptide is Large ribosomal subunit protein uL2 (Mycoplasmopsis synoviae (strain 53) (Mycoplasma synoviae)).